A 310-amino-acid chain; its full sequence is NAD kinase 1 (310 aa).

D68 functions as the Proton acceptor in the catalytic mechanism. Residues 68-69 (DG), 145-146 (NE), R156, H175, and D177 contribute to the NAD(+) site.

The protein belongs to the NAD kinase family. A divalent metal cation is required as a cofactor.

The protein resides in the cytoplasm. The enzyme catalyses NAD(+) + ATP = ADP + NADP(+) + H(+). In terms of biological role, involved in the regulation of the intracellular balance of NAD and NADP, and is a key enzyme in the biosynthesis of NADP. Catalyzes specifically the phosphorylation on 2'-hydroxyl of the adenosine moiety of NAD to yield NADP. The protein is NAD kinase 1 of Gloeobacter violaceus (strain ATCC 29082 / PCC 7421).